Consider the following 82-residue polypeptide: Small ribosomal subunit protein bS18 (82 aa).

The segment at 1–24 is disordered; that stretch reads MKRTNMKKARMEQSRRPKKNPLKA.

The protein belongs to the bacterial ribosomal protein bS18 family. In terms of assembly, part of the 30S ribosomal subunit. Forms a tight heterodimer with protein bS6.

Its function is as follows. Binds as a heterodimer with protein bS6 to the central domain of the 16S rRNA, where it helps stabilize the platform of the 30S subunit. The protein is Small ribosomal subunit protein bS18 of Corynebacterium jeikeium (strain K411).